The following is a 1571-amino-acid chain: Pentafunctional AROM polypeptide (1571 aa).

The segment at M1–K380 is 3-dehydroquinate synthase. NAD(+)-binding positions include D43–N45, E81–K84, G112–V114, and D117. R128 contributes to the 7-phospho-2-dehydro-3-deoxy-D-arabino-heptonate binding site. T137–S138 provides a ligand contact to NAD(+). D144 and K150 together coordinate 7-phospho-2-dehydro-3-deoxy-D-arabino-heptonate. K159 lines the NAD(+) pocket. N160 contacts 7-phospho-2-dehydro-3-deoxy-D-arabino-heptonate. NAD(+) is bound by residues F177 to T180 and N188. E192 is a Zn(2+) binding site. 7-phospho-2-dehydro-3-deoxy-D-arabino-heptonate contacts are provided by residues E192–K195 and K244. The Proton acceptor; for 3-dehydroquinate synthase activity role is filled by E254. 7-phospho-2-dehydro-3-deoxy-D-arabino-heptonate-binding positions include R258–N262 and H265. Residue H265 coordinates Zn(2+). H269 serves as the catalytic Proton acceptor; for 3-dehydroquinate synthase activity. 7-phospho-2-dehydro-3-deoxy-D-arabino-heptonate is bound by residues H281 and K352. H281 provides a ligand contact to Zn(2+). The EPSP synthase stretch occupies residues V393 to V843. Residue C825 is the For EPSP synthase activity of the active site. Residues K868–S1058 are shikimate kinase. G875–S882 is a binding site for ATP. Residues L1059–Q1271 are 3-dehydroquinase. K1204 serves as the catalytic Schiff-base intermediate with substrate; for 3-dehydroquinate dehydratase activity. Residues E1284–Q1571 form a shikimate dehydrogenase region.

In the N-terminal section; belongs to the sugar phosphate cyclases superfamily. Dehydroquinate synthase family. This sequence in the 2nd section; belongs to the EPSP synthase family. The protein in the 3rd section; belongs to the shikimate kinase family. It in the 4th section; belongs to the type-I 3-dehydroquinase family. In the C-terminal section; belongs to the shikimate dehydrogenase family. As to quaternary structure, homodimer. Zn(2+) serves as cofactor.

The protein localises to the cytoplasm. The enzyme catalyses 7-phospho-2-dehydro-3-deoxy-D-arabino-heptonate = 3-dehydroquinate + phosphate. The catalysed reaction is 3-dehydroquinate = 3-dehydroshikimate + H2O. It catalyses the reaction shikimate + NADP(+) = 3-dehydroshikimate + NADPH + H(+). It carries out the reaction shikimate + ATP = 3-phosphoshikimate + ADP + H(+). The enzyme catalyses 3-phosphoshikimate + phosphoenolpyruvate = 5-O-(1-carboxyvinyl)-3-phosphoshikimate + phosphate. The protein operates within metabolic intermediate biosynthesis; chorismate biosynthesis; chorismate from D-erythrose 4-phosphate and phosphoenolpyruvate: step 2/7. It participates in metabolic intermediate biosynthesis; chorismate biosynthesis; chorismate from D-erythrose 4-phosphate and phosphoenolpyruvate: step 3/7. Its pathway is metabolic intermediate biosynthesis; chorismate biosynthesis; chorismate from D-erythrose 4-phosphate and phosphoenolpyruvate: step 4/7. It functions in the pathway metabolic intermediate biosynthesis; chorismate biosynthesis; chorismate from D-erythrose 4-phosphate and phosphoenolpyruvate: step 5/7. The protein operates within metabolic intermediate biosynthesis; chorismate biosynthesis; chorismate from D-erythrose 4-phosphate and phosphoenolpyruvate: step 6/7. Functionally, the AROM polypeptide catalyzes 5 consecutive enzymatic reactions in prechorismate polyaromatic amino acid biosynthesis. This is Pentafunctional AROM polypeptide from Scheffersomyces stipitis (strain ATCC 58785 / CBS 6054 / NBRC 10063 / NRRL Y-11545) (Yeast).